Reading from the N-terminus, the 216-residue chain is Small ribosomal subunit protein eS6 (216 aa).

Belongs to the eukaryotic ribosomal protein eS6 family.

The sequence is that of Small ribosomal subunit protein eS6 from Staphylothermus marinus (strain ATCC 43588 / DSM 3639 / JCM 9404 / F1).